We begin with the raw amino-acid sequence, 239 residues long: Sugar fermentation stimulation protein homolog (239 aa).

This sequence belongs to the SfsA family.

The sequence is that of Sugar fermentation stimulation protein homolog from Sinorhizobium medicae (strain WSM419) (Ensifer medicae).